Consider the following 223-residue polypeptide: Enolase-phosphatase E1 (223 aa).

It belongs to the HAD-like hydrolase superfamily. MasA/MtnC family. Monomer. Mg(2+) serves as cofactor.

The catalysed reaction is 5-methylsulfanyl-2,3-dioxopentyl phosphate + H2O = 1,2-dihydroxy-5-(methylsulfanyl)pent-1-en-3-one + phosphate. The protein operates within amino-acid biosynthesis; L-methionine biosynthesis via salvage pathway; L-methionine from S-methyl-5-thio-alpha-D-ribose 1-phosphate: step 3/6. It participates in amino-acid biosynthesis; L-methionine biosynthesis via salvage pathway; L-methionine from S-methyl-5-thio-alpha-D-ribose 1-phosphate: step 4/6. Functionally, bifunctional enzyme that catalyzes the enolization of 2,3-diketo-5-methylthiopentyl-1-phosphate (DK-MTP-1-P) into the intermediate 2-hydroxy-3-keto-5-methylthiopentenyl-1-phosphate (HK-MTPenyl-1-P), which is then dephosphorylated to form the acireductone 1,2-dihydroxy-3-keto-5-methylthiopentene (DHK-MTPene). This is Enolase-phosphatase E1 from Aquifex aeolicus (strain VF5).